A 124-amino-acid polypeptide reads, in one-letter code: MSLEQKSQHCKPEEGLDTQEEALGLVGVQAATTEEQEAVSSSSPLVPGTLGEVPAAGSPGPLKSPQGASAIPTAIDFTLWRQSIKGSSNQEEEGPSTSPDPESVFRAALSKKVADLIHFLLLKY.

Positions 1–14 are enriched in basic and acidic residues; the sequence is MSLEQKSQHCKPEE. 2 disordered regions span residues 1–69 and 82–103; these read MSLE…QGAS and QSIKGSSNQEEEGPSTSPDPES. Residues 3-124 form the MAGE domain; it reads LEQKSQHCKP…DLIHFLLLKY (122 aa). 2 stretches are compositionally biased toward polar residues: residues 30–44 and 82–100; these read AATTEEQEAVSSSSP and QSIKGSSNQEEEGPSTSPD.

As to expression, expressed in many tumors of several types, such as melanoma, head and neck squamous cell carcinoma, lung carcinoma and breast carcinoma, but not in normal tissues except for testes.

In terms of biological role, may negatively regulates apoptosis. The polypeptide is Putative melanoma-associated antigen 5P (Homo sapiens (Human)).